Here is a 251-residue protein sequence, read N- to C-terminus: Cell division protein ZapD (251 aa).

This sequence belongs to the ZapD family. In terms of assembly, interacts with FtsZ.

It localises to the cytoplasm. Functionally, cell division factor that enhances FtsZ-ring assembly. Directly interacts with FtsZ and promotes bundling of FtsZ protofilaments, with a reduction in FtsZ GTPase activity. The polypeptide is Cell division protein ZapD (Burkholderia cenocepacia (strain HI2424)).